A 260-amino-acid polypeptide reads, in one-letter code: Pyridoxine 5'-phosphate synthase (260 aa).

3-amino-2-oxopropyl phosphate is bound by residues Asn-7 and Arg-18. The Proton acceptor role is filled by His-43. 1-deoxy-D-xylulose 5-phosphate contacts are provided by Arg-45 and His-50. Glu-83 (proton acceptor) is an active-site residue. Thr-113 is a 1-deoxy-D-xylulose 5-phosphate binding site. His-208 functions as the Proton donor in the catalytic mechanism. Residues Asp-209 and 230–231 (GH) each bind 3-amino-2-oxopropyl phosphate.

It belongs to the PNP synthase family. In terms of assembly, homooctamer; tetramer of dimers.

Its subcellular location is the cytoplasm. The catalysed reaction is 3-amino-2-oxopropyl phosphate + 1-deoxy-D-xylulose 5-phosphate = pyridoxine 5'-phosphate + phosphate + 2 H2O + H(+). It participates in cofactor biosynthesis; pyridoxine 5'-phosphate biosynthesis; pyridoxine 5'-phosphate from D-erythrose 4-phosphate: step 5/5. Its function is as follows. Catalyzes the complicated ring closure reaction between the two acyclic compounds 1-deoxy-D-xylulose-5-phosphate (DXP) and 3-amino-2-oxopropyl phosphate (1-amino-acetone-3-phosphate or AAP) to form pyridoxine 5'-phosphate (PNP) and inorganic phosphate. This chain is Pyridoxine 5'-phosphate synthase, found in Leptospira biflexa serovar Patoc (strain Patoc 1 / Ames).